Reading from the N-terminus, the 637-residue chain is GTP-binding protein 4 (637 aa).

A2 bears the N-acetylalanine mark. K103 is modified (N6-acetyllysine; alternate). Residue K103 forms a Glycyl lysine isopeptide (Lys-Gly) (interchain with G-Cter in SUMO2); alternate linkage. S122 bears the Phosphoserine mark. Positions 169-340 constitute an OBG-type G domain; the sequence is RTLLLCGYPN…VKTEACDRLL (172 aa). Residues 175 to 182, 221 to 225, and 289 to 292 contribute to the GTP site; these read GYPNVGKS, DTPGI, and SKCE. K332 is covalently cross-linked (Glycyl lysine isopeptide (Lys-Gly) (interchain with G-Cter in SUMO2)). 2 disordered regions span residues 499 to 518 and 525 to 637; these read SKEK…KVQR and MRSL…KERR. K535 is covalently cross-linked (Glycyl lysine isopeptide (Lys-Gly) (interchain with G-Cter in SUMO2)). Over residues 542–555 the composition is skewed to basic residues; the sequence is VRARRSRSVTRKRK. S559 is modified (phosphoserine). The segment covering 563–574 has biased composition (low complexity); sequence SSIARSRSRSCS. Residues 576–588 are compositionally biased toward basic and acidic residues; the sequence is TPRDVSGLRDVKM. Positions 589–607 are enriched in basic residues; that stretch reads VKKAKTMMKKAQKKMNRLG. The span at 608–621 shows a compositional bias: basic and acidic residues; it reads KKGEADRHVFDMKP. Basic residues predominate over residues 622 to 637; sequence KHLLSGKRKAGKKERR.

The protein belongs to the TRAFAC class OBG-HflX-like GTPase superfamily. OBG GTPase family. NOG subfamily. As to quaternary structure, associates with pre-60S ribosomal particles. Interacts with MINAS-60 (product of an alternative open reading frame of RBM10).

It localises to the nucleus. The protein localises to the nucleolus. In terms of biological role, involved in the biogenesis of the 60S ribosomal subunit. Acts as TP53 repressor, preventing TP53 stabilization and cell cycle arrest. This Rattus norvegicus (Rat) protein is GTP-binding protein 4 (Gtpbp4).